The chain runs to 243 residues: Protein canopy homolog 3 (243 aa).

An N-terminal signal peptide occupies residues 1–15; sequence MWFLFLLLPLWAGCA. A Saposin B-type domain is found at 27–236; the sequence is SKCEVCKYVA…KEEKKQMDQP (210 aa). Intrachain disulfides connect Cys29–Cys188, Cys32–Cys176, and Cys86–Cys148. Positions 136-160 form a coiled coil; sequence ETSAEVADMKKQCDVMMENYEEVIE. Residues 186–243 form a disordered region; sequence QSCLSEQGDSRKGDTGPSTGTKKQKKQGEKKNKSKKQNSGSKEEKKQMDQPMAAKEEL. Over residues 226-243 the composition is skewed to basic and acidic residues; that stretch reads SKEEKKQMDQPMAAKEEL.

It belongs to the canopy family.

Its subcellular location is the endoplasmic reticulum. Its function is as follows. Toll-like receptor (TLR)-specific co-chaperone for HSP90B1. Required for proper TLR folding and hence controls TLR exit from the endoplasmic reticulum. Consequently, required for immune responses. The sequence is that of Protein canopy homolog 3 (cnpy3) from Xenopus laevis (African clawed frog).